The primary structure comprises 637 residues: Limonene/alpha-pinene synthase, chloroplastic (637 aa).

A chloroplast-targeting transit peptide spans 1 to 56; the sequence is MALLSIVSLQVPKSCGLKSLISSSNVQKALCISTAVPTLRMRRRQKALVINMKLTT. Mg(2+) contacts are provided by aspartate 388, aspartate 392, and aspartate 540. A DDXXD motif motif is present at residues 388 to 392; sequence DDMYD.

It belongs to the terpene synthase family. Tpsd subfamily. Mg(2+) is required as a cofactor. The cofactor is Mn(2+). Requires K(+) as cofactor.

The protein localises to the plastid. It localises to the chloroplast. The catalysed reaction is (2E)-geranyl diphosphate = (4S)-limonene + diphosphate. The enzyme catalyses (2E)-geranyl diphosphate = (1S,5S)-alpha-pinene + diphosphate. Its pathway is terpene metabolism; oleoresin biosynthesis. In terms of biological role, involved in defensive oleoresin formation in conifers in response to insect attack or other injury. Involved in monoterpene (C10) olefins biosynthesis. This chain is Limonene/alpha-pinene synthase, chloroplastic (ag11), found in Abies grandis (Grand fir).